A 464-amino-acid chain; its full sequence is Na(+)/H(+) antiporter NhaA 1 (464 aa).

The next 11 helical transmembrane spans lie at 41 to 61 (GGLI…SPLA), 85 to 105 (LHHW…GLEL), 121 to 141 (VLPI…YMSL), 150 to 170 (GWGI…ALLA), 180 to 200 (FLVA…AVFY), 207 to 227 (SFLI…MIGI), 234 to 254 (FFVG…ATLA), 329 to 349 (VAFF…IDFG), 363 to 383 (VVFG…WLAI), 399 to 419 (IIGA…IAEL), and 428 to 448 (IIQA…AGYL).

Belongs to the NhaA Na(+)/H(+) (TC 2.A.33) antiporter family.

The protein resides in the cell inner membrane. It catalyses the reaction Na(+)(in) + 2 H(+)(out) = Na(+)(out) + 2 H(+)(in). In terms of biological role, na(+)/H(+) antiporter that extrudes sodium in exchange for external protons. The chain is Na(+)/H(+) antiporter NhaA 1 from Saccharophagus degradans (strain 2-40 / ATCC 43961 / DSM 17024).